We begin with the raw amino-acid sequence, 247 residues long: Type III pantothenate kinase (247 aa).

Residue 6–13 coordinates ATP; sequence DVGNTHTT. Residue 101–104 coordinates substrate; it reads GADR. The active-site Proton acceptor is the Asp-103. Asp-123 lines the K(+) pocket. Thr-126 is an ATP binding site. Thr-177 contacts substrate.

It belongs to the type III pantothenate kinase family. Homodimer. NH4(+) is required as a cofactor. Requires K(+) as cofactor.

It is found in the cytoplasm. The catalysed reaction is (R)-pantothenate + ATP = (R)-4'-phosphopantothenate + ADP + H(+). It functions in the pathway cofactor biosynthesis; coenzyme A biosynthesis; CoA from (R)-pantothenate: step 1/5. In terms of biological role, catalyzes the phosphorylation of pantothenate (Pan), the first step in CoA biosynthesis. The chain is Type III pantothenate kinase from Thermosipho melanesiensis (strain DSM 12029 / CIP 104789 / BI429).